The chain runs to 84 residues: ATP synthase subunit c (84 aa).

Helical transmembrane passes span Ile9 to Ile29 and Ile54 to Ile74.

This sequence belongs to the ATPase C chain family. In terms of assembly, F-type ATPases have 2 components, F(1) - the catalytic core - and F(0) - the membrane proton channel. F(1) has five subunits: alpha(3), beta(3), gamma(1), delta(1), epsilon(1). F(0) has three main subunits: a(1), b(2) and c(10-14). The alpha and beta chains form an alternating ring which encloses part of the gamma chain. F(1) is attached to F(0) by a central stalk formed by the gamma and epsilon chains, while a peripheral stalk is formed by the delta and b chains.

Its subcellular location is the cell inner membrane. In terms of biological role, f(1)F(0) ATP synthase produces ATP from ADP in the presence of a proton or sodium gradient. F-type ATPases consist of two structural domains, F(1) containing the extramembraneous catalytic core and F(0) containing the membrane proton channel, linked together by a central stalk and a peripheral stalk. During catalysis, ATP synthesis in the catalytic domain of F(1) is coupled via a rotary mechanism of the central stalk subunits to proton translocation. Functionally, key component of the F(0) channel; it plays a direct role in translocation across the membrane. A homomeric c-ring of between 10-14 subunits forms the central stalk rotor element with the F(1) delta and epsilon subunits. The polypeptide is ATP synthase subunit c (Haemophilus influenzae (strain PittEE)).